We begin with the raw amino-acid sequence, 536 residues long: Phosphoenolpyruvate carboxykinase (ATP) (536 aa).

Substrate-binding residues include Arg61, Tyr195, and Lys201. Residues Lys201, His220, and 236-244 each bind ATP; that span reads GLSGTGKTT. Lys201 and His220 together coordinate Mn(2+). Asp257 lines the Mn(2+) pocket. ATP is bound by residues Glu285, Arg323, and Thr448. Arg323 provides a ligand contact to substrate.

The protein belongs to the phosphoenolpyruvate carboxykinase (ATP) family. Requires Mn(2+) as cofactor.

Its subcellular location is the cytoplasm. It carries out the reaction oxaloacetate + ATP = phosphoenolpyruvate + ADP + CO2. It functions in the pathway carbohydrate biosynthesis; gluconeogenesis. In terms of biological role, involved in the gluconeogenesis. Catalyzes the conversion of oxaloacetate (OAA) to phosphoenolpyruvate (PEP) through direct phosphoryl transfer between the nucleoside triphosphate and OAA. The protein is Phosphoenolpyruvate carboxykinase (ATP) of Methylobacterium sp. (strain 4-46).